A 365-amino-acid chain; its full sequence is Glutamate 5-kinase 1 (365 aa).

K9 is an ATP binding site. Residues S49, D136, and N148 each contribute to the substrate site. ATP is bound by residues T168–D169 and T210–K216. A PUA domain is found at S276–E353.

Belongs to the glutamate 5-kinase family.

Its subcellular location is the cytoplasm. It carries out the reaction L-glutamate + ATP = L-glutamyl 5-phosphate + ADP. Its pathway is amino-acid biosynthesis; L-proline biosynthesis; L-glutamate 5-semialdehyde from L-glutamate: step 1/2. Functionally, catalyzes the transfer of a phosphate group to glutamate to form L-glutamate 5-phosphate. This chain is Glutamate 5-kinase 1, found in Bacillus subtilis (strain 168).